A 98-amino-acid polypeptide reads, in one-letter code: NADH-ubiquinone oxidoreductase chain 4L (98 aa).

3 consecutive transmembrane segments (helical) span residues 1-21 (MSMV…GLLM), 29-49 (SLLC…VTIL), and 61-81 (IILL…LVMV).

Belongs to the complex I subunit 4L family. As to quaternary structure, core subunit of respiratory chain NADH dehydrogenase (Complex I) which is composed of 45 different subunits.

The protein localises to the mitochondrion inner membrane. It catalyses the reaction a ubiquinone + NADH + 5 H(+)(in) = a ubiquinol + NAD(+) + 4 H(+)(out). Its function is as follows. Core subunit of the mitochondrial membrane respiratory chain NADH dehydrogenase (Complex I) which catalyzes electron transfer from NADH through the respiratory chain, using ubiquinone as an electron acceptor. Part of the enzyme membrane arm which is embedded in the lipid bilayer and involved in proton translocation. The polypeptide is NADH-ubiquinone oxidoreductase chain 4L (MT-ND4L) (Erignathus barbatus (Bearded seal)).